Here is a 265-residue protein sequence, read N- to C-terminus: Aquaporin-5 (265 aa).

Over 1 to 12 the chain is Cytoplasmic; it reads MKKEVCSAAFLK. The helical transmembrane segment at 13-33 threads the bilayer; sequence AVFAEFLATLIFVFFGLGSAL. Residues 34–39 lie on the Extracellular side of the membrane; it reads KWPSAM. A helical transmembrane segment spans residues 40-60; that stretch reads PSVLQISLAFGLAIGTMAQAL. Topologically, residues 61–65 are cytoplasmic; sequence GPVSG. Positions 66 to 74 form an intramembrane region, discontinuously helical; that stretch reads GHMNPAITL. Residues 69-71 carry the NPA 1 motif; that stretch reads NPA. Topologically, residues 75–87 are cytoplasmic; it reads ALLVGNQISLLRA. The chain crosses the membrane as a helical span at residues 88 to 108; it reads VFYLVAQLVGAIAGAAILYGL. The Extracellular portion of the chain corresponds to 109–126; sequence APYNARSNLAVNALNNNT. 2 N-linked (GlcNAc...) asparagine glycosylation sites follow: asparagine 124 and asparagine 125. The helical transmembrane segment at 127-147 threads the bilayer; it reads TAGQAVVAEMILTFQLALCVF. At 148 to 158 the chain is on the cytoplasmic side; that stretch reads SSTDSRRTSPV. Residues 159–179 form a helical membrane-spanning segment; sequence GSPALSIGLSVTLGHLVGIYF. Residue threonine 180 is a topological domain, extracellular. The segment at residues 181-191 is an intramembrane region (discontinuously helical); it reads GCSMNPARSFG. The NPA 2 motif lies at 185–187; it reads NPA. The Extracellular segment spans residues 192-203; the sequence is PAVIMSRFSSAH. The chain crosses the membrane as a helical span at residues 204 to 224; sequence WVFWVGPIVGAATAAIIYFYL. The Cytoplasmic segment spans residues 225–265; the sequence is LFPHSLSLSDRVAILKGTYEPDEDWEESQEERKKTMELTAH.

The protein belongs to the MIP/aquaporin (TC 1.A.8) family. As to quaternary structure, homotetramer; each monomer provides an independent water pore. Interacts with TRPV4; the interaction is probably indirect and regulates TRPV4 activation by hypotonicity.

The protein resides in the apical cell membrane. It is found in the cell membrane. Its subcellular location is the cytoplasmic vesicle membrane. It catalyses the reaction H2O(in) = H2O(out). Aquaporins form homotetrameric transmembrane channels, with each monomer independently mediating water transport across the plasma membrane along its osmotic gradient. Plays an important role in fluid secretion in salivary glands. Required for TRPV4 activation by hypotonicity. Together with TRPV4, controls regulatory volume decrease in salivary epithelial cells. Seems to play a redundant role in water transport in the eye, lung and in sweat glands. The chain is Aquaporin-5 from Ovis aries (Sheep).